Consider the following 408-residue polypeptide: uncharacterized protein (408 aa).

Disordered regions lie at residues 218–265 (EPTA…TSER) and 367–408 (MESE…ETPN). Low complexity predominate over residues 369-379 (SEVINSSSSTS). The span at 394-408 (IVEEVPETAENETPN) shows a compositional bias: acidic residues.

This sequence to C.elegans C05E11.1.

This is an uncharacterized protein from Arabidopsis thaliana (Mouse-ear cress).